We begin with the raw amino-acid sequence, 337 residues long: Glyceraldehyde-3-phosphate dehydrogenase 1, cytosolic (337 aa).

NAD(+)-binding positions include 13 to 14, Asp-35, and Arg-82; that span reads RI. Residues 153-155, Thr-184, 213-214, and Arg-236 contribute to the D-glyceraldehyde 3-phosphate site; these read SCT and TG. Cys-154 acts as the Nucleophile in catalysis. Residue Asn-318 coordinates NAD(+).

The protein belongs to the glyceraldehyde-3-phosphate dehydrogenase family. Homotetramer.

The protein localises to the cytoplasm. The enzyme catalyses D-glyceraldehyde 3-phosphate + phosphate + NAD(+) = (2R)-3-phospho-glyceroyl phosphate + NADH + H(+). The protein operates within carbohydrate degradation; glycolysis; pyruvate from D-glyceraldehyde 3-phosphate: step 1/5. In terms of biological role, key enzyme in glycolysis that catalyzes the first step of the pathway by converting D-glyceraldehyde 3-phosphate (G3P) into 3-phospho-D-glyceroyl phosphate. Essential for the maintenance of cellular ATP levels and carbohydrate metabolism. The polypeptide is Glyceraldehyde-3-phosphate dehydrogenase 1, cytosolic (GAPC) (Hordeum vulgare (Barley)).